The primary structure comprises 846 residues: Protein kintoun (846 aa).

Disordered regions lie at residues 216 to 240 (TAEE…GKPE), 372 to 405 (LRHF…DSKA), 574 to 631 (QALK…ESAC), and 762 to 846 (KKNQ…EMDD). Over residues 372 to 382 (LRHFSREDSGV) the composition is skewed to basic and acidic residues. S380 is modified (phosphoserine). Residues 391 to 400 (PVEEDPDGEL) are compositionally biased toward acidic residues. Basic and acidic residues predominate over residues 583 to 603 (GTKEEEEKGNQDQEPESDKQH). Composition is skewed to basic residues over residues 611-622 (KAGKKQRKRNKK) and 762-776 (KKNQ…RAQQ). The residue at position 780 (S780) is a Phosphoserine. The segment covering 795–809 (LKQQENQSRNCNKPN) has biased composition (polar residues).

This sequence belongs to the PIH1 family. Kintoun subfamily. Interacts with Pp1alpha-96A, Pp1-87B, Pp1-13C and flw.

It is found in the cytoplasm. Required for cytoplasmic pre-assembly of axonemal dyneins, thereby playing a central role in motility in cilia and flagella. Involved in pre-assembly of dynein arm complexes in the cytoplasm before intraflagellar transport loads them for the ciliary compartment. The protein is Protein kintoun of Drosophila yakuba (Fruit fly).